The sequence spans 336 residues: Ornithine carbamoyltransferase, catabolic (336 aa).

Carbamoyl phosphate-binding positions include 62 to 65 (STRT), glutamine 89, arginine 113, and 140 to 143 (HPTQ). Residues asparagine 172, aspartate 236, and 240 to 241 (SM) contribute to the L-ornithine site. Residues 277 to 278 (CL) and arginine 322 contribute to the carbamoyl phosphate site.

Belongs to the aspartate/ornithine carbamoyltransferase superfamily. OTCase family.

It is found in the cytoplasm. It carries out the reaction carbamoyl phosphate + L-ornithine = L-citrulline + phosphate + H(+). The protein operates within amino-acid degradation; L-arginine degradation via ADI pathway; carbamoyl phosphate from L-arginine: step 2/2. Reversibly catalyzes the transfer of the carbamoyl group from carbamoyl phosphate (CP) to the N(epsilon) atom of ornithine (ORN) to produce L-citrulline. The polypeptide is Ornithine carbamoyltransferase, catabolic (Staphylococcus aureus (strain MSSA476)).